The sequence spans 227 residues: Ribose-5-phosphate isomerase A (227 aa).

Substrate is bound by residues 30–33, 86–89, and 99–102; these read TGST, DGAD, and KGMG. The active-site Proton acceptor is glutamate 108. Lysine 126 lines the substrate pocket.

The protein belongs to the ribose 5-phosphate isomerase family. As to quaternary structure, homodimer.

The catalysed reaction is aldehydo-D-ribose 5-phosphate = D-ribulose 5-phosphate. It functions in the pathway carbohydrate degradation; pentose phosphate pathway; D-ribose 5-phosphate from D-ribulose 5-phosphate (non-oxidative stage): step 1/1. In terms of biological role, catalyzes the reversible conversion of ribose-5-phosphate to ribulose 5-phosphate. The polypeptide is Ribose-5-phosphate isomerase A (Thermus thermophilus (strain ATCC 27634 / DSM 579 / HB8)).